We begin with the raw amino-acid sequence, 281 residues long: Rhomboid protease AarA (281 aa).

7 consecutive transmembrane segments (helical) span residues Phe16–Phe36, Met76–Ile96, Phe105–Trp125, Ile145–Ile165, Gln185–Val205, Ala208–Pro228, and Val233–Tyr253. The active-site Nucleophile is the Ser150. His210 serves as the catalytic Charge relay system.

The protein belongs to the peptidase S54 family.

The protein resides in the cell membrane. The catalysed reaction is Cleaves type-1 transmembrane domains using a catalytic dyad composed of serine and histidine that are contributed by different transmembrane domains.. Rhomboid serine protease that catalyzes intramembrane proteolysis. Mediates quorum-sensing and the subsequent regulation of target genes via activation of the Tat protein export system. Catalyzes the proteolytic activation of TatA by removal of its N-terminal extension. The protein is Rhomboid protease AarA (aarA) of Providencia stuartii.